Consider the following 102-residue polypeptide: Integration host factor subunit alpha (102 aa).

Belongs to the bacterial histone-like protein family. In terms of assembly, heterodimer of an alpha and a beta chain.

Functionally, this protein is one of the two subunits of integration host factor, a specific DNA-binding protein that functions in genetic recombination as well as in transcriptional and translational control. The polypeptide is Integration host factor subunit alpha (Albidiferax ferrireducens (strain ATCC BAA-621 / DSM 15236 / T118) (Rhodoferax ferrireducens)).